Consider the following 316-residue polypeptide: Vacuolar membrane protein YNL058C (316 aa).

Residues Lys32–Ala60 form a disordered region. Residues Val93–Leu113 form a helical membrane-spanning segment. Phosphoserine occurs at positions 148, 256, and 276. The interval Glu240–Met304 is disordered. A compositionally biased stretch (basic and acidic residues) spans Ser256 to His271.

It belongs to the PRM5 family.

The protein resides in the vacuole membrane. The sequence is that of Vacuolar membrane protein YNL058C from Saccharomyces cerevisiae (strain ATCC 204508 / S288c) (Baker's yeast).